Consider the following 286-residue polypeptide: Polyamine aminopropyltransferase (286 aa).

The 234-residue stretch at 5-238 folds into the PABS domain; that stretch reads TMWHETLHDQ…GIMTFAWATD (234 aa). Gln33 provides a ligand contact to S-methyl-5'-thioadenosine. His64 and Asp88 together coordinate spermidine. Residues Glu108 and 140–141 contribute to the S-methyl-5'-thioadenosine site; that span reads DG. Catalysis depends on Asp158, which acts as the Proton acceptor. Residue 158 to 161 coordinates spermidine; it reads DCTD. Residue Pro165 participates in S-methyl-5'-thioadenosine binding.

The protein belongs to the spermidine/spermine synthase family. In terms of assembly, homodimer or homotetramer.

The protein resides in the cytoplasm. The catalysed reaction is S-adenosyl 3-(methylsulfanyl)propylamine + putrescine = S-methyl-5'-thioadenosine + spermidine + H(+). Its pathway is amine and polyamine biosynthesis; spermidine biosynthesis; spermidine from putrescine: step 1/1. In terms of biological role, catalyzes the irreversible transfer of a propylamine group from the amino donor S-adenosylmethioninamine (decarboxy-AdoMet) to putrescine (1,4-diaminobutane) to yield spermidine. The polypeptide is Polyamine aminopropyltransferase (Salmonella enteritidis PT4 (strain P125109)).